The sequence spans 200 residues: Nucleoside triphosphate pyrophosphatase (200 aa).

Aspartate 79 serves as the catalytic Proton acceptor.

Belongs to the Maf family. The cofactor is a divalent metal cation.

The protein resides in the cytoplasm. It carries out the reaction a ribonucleoside 5'-triphosphate + H2O = a ribonucleoside 5'-phosphate + diphosphate + H(+). It catalyses the reaction a 2'-deoxyribonucleoside 5'-triphosphate + H2O = a 2'-deoxyribonucleoside 5'-phosphate + diphosphate + H(+). Its function is as follows. Nucleoside triphosphate pyrophosphatase. May have a dual role in cell division arrest and in preventing the incorporation of modified nucleotides into cellular nucleic acids. This is Nucleoside triphosphate pyrophosphatase from Legionella pneumophila (strain Paris).